A 920-amino-acid polypeptide reads, in one-letter code: DNA ligase (920 aa).

Residues 90 to 94 (DAAYD), 139 to 140 (SL), and E173 each bind NAD(+). The N6-AMP-lysine intermediate role is filled by K175. The NAD(+) site is built by R196, E235, K360, and K384. The Zn(2+) site is built by C481, C484, C500, and C506. Positions 662-691 (GEAAIESAETQGDTASETTGAPTGAEAPLG) are disordered. Residues 669 to 682 (AETQGDTASETTGA) show a composition bias toward polar residues. A BRCT domain is found at 839–920 (SLPQTLAGKT…FAQLLATGTI (82 aa)).

This sequence belongs to the NAD-dependent DNA ligase family. LigA subfamily. The cofactor is Mg(2+). Mn(2+) is required as a cofactor.

The enzyme catalyses NAD(+) + (deoxyribonucleotide)n-3'-hydroxyl + 5'-phospho-(deoxyribonucleotide)m = (deoxyribonucleotide)n+m + AMP + beta-nicotinamide D-nucleotide.. Functionally, DNA ligase that catalyzes the formation of phosphodiester linkages between 5'-phosphoryl and 3'-hydroxyl groups in double-stranded DNA using NAD as a coenzyme and as the energy source for the reaction. It is essential for DNA replication and repair of damaged DNA. The sequence is that of DNA ligase from Bifidobacterium longum (strain DJO10A).